A 58-amino-acid chain; its full sequence is Small ribosomal subunit protein bS21 (58 aa).

The protein belongs to the bacterial ribosomal protein bS21 family.

In Lactobacillus acidophilus (strain ATCC 700396 / NCK56 / N2 / NCFM), this protein is Small ribosomal subunit protein bS21.